The following is a 587-amino-acid chain: Putative inactive receptor-like protein kinase At1g64210 (587 aa).

The first 19 residues, Met-1–Ser-19, serve as a signal peptide directing secretion. Residues Gln-20 to Ala-232 are Extracellular-facing. N-linked (GlcNAc...) asparagine glycans are attached at residues Asn-37 and Asn-44. LRR repeat units lie at residues Ser-89–Lys-112, Ser-113–Lys-136, Asn-137–Thr-160, Ser-161–Lys-183, and Leu-184–Phe-205. 4 N-linked (GlcNAc...) asparagine glycosylation sites follow: Asn-149, Asn-169, Asn-188, and Asn-214. Residues Phe-233–Ile-253 traverse the membrane as a helical segment. Residues Thr-254–Glu-587 are Cytoplasmic-facing. Positions Ser-307–Ile-581 constitute a Protein kinase domain. At Ser-309 the chain carries Phosphoserine. ATP is bound by residues Leu-313–Thr-321 and Lys-335. Ser-386 carries the post-translational modification Phosphoserine. A phosphothreonine mark is found at Thr-462, Thr-463, Thr-466, and Thr-477.

The protein localises to the cell membrane. This is Putative inactive receptor-like protein kinase At1g64210 from Arabidopsis thaliana (Mouse-ear cress).